A 137-amino-acid polypeptide reads, in one-letter code: Large ribosomal subunit protein eL28 (137 aa).

At serine 2 the chain carries N-acetylserine. Glycyl lysine isopeptide (Lys-Gly) (interchain with G-Cter in SUMO2) cross-links involve residues lysine 58 and lysine 65. Position 115 is a phosphoserine (serine 115).

This sequence belongs to the eukaryotic ribosomal protein eL28 family. In terms of assembly, component of the large ribosomal subunit.

The protein localises to the cytoplasm. Functionally, component of the large ribosomal subunit. The ribosome is a large ribonucleoprotein complex responsible for the synthesis of proteins in the cell. The protein is Large ribosomal subunit protein eL28 (RPL28) of Oryctolagus cuniculus (Rabbit).